A 209-amino-acid chain; its full sequence is 2,3-bisphosphoglycerate-dependent phosphoglycerate mutase (209 aa).

Substrate-binding positions include 8–15 (RHGQSEGN), 21–22 (TG), Arg-60, 87–90 (ERDY), Lys-98, 114–115 (RR), and 158–159 (GN). Catalysis depends on His-9, which acts as the Tele-phosphohistidine intermediate. Glu-87 acts as the Proton donor/acceptor in catalysis.

Belongs to the phosphoglycerate mutase family. BPG-dependent PGAM subfamily. In terms of assembly, homodimer.

The enzyme catalyses (2R)-2-phosphoglycerate = (2R)-3-phosphoglycerate. Its pathway is carbohydrate degradation; glycolysis; pyruvate from D-glyceraldehyde 3-phosphate: step 3/5. Catalyzes the interconversion of 2-phosphoglycerate and 3-phosphoglycerate. The sequence is that of 2,3-bisphosphoglycerate-dependent phosphoglycerate mutase from Rhizobium etli (strain ATCC 51251 / DSM 11541 / JCM 21823 / NBRC 15573 / CFN 42).